Reading from the N-terminus, the 203-residue chain is Outer-membrane lipoprotein carrier protein (203 aa).

Residues 1–21 (MKKLIISCCLLATFSAAGAWA) form the signal peptide. Residues 174 to 203 (ALKSQQSGPISADKFKFRPPKGVTVDDQRQ) form a disordered region.

Belongs to the LolA family. As to quaternary structure, monomer.

It is found in the periplasm. Participates in the translocation of lipoproteins from the inner membrane to the outer membrane. Only forms a complex with a lipoprotein if the residue after the N-terminal Cys is not an aspartate (The Asp acts as a targeting signal to indicate that the lipoprotein should stay in the inner membrane). This is Outer-membrane lipoprotein carrier protein from Erwinia tasmaniensis (strain DSM 17950 / CFBP 7177 / CIP 109463 / NCPPB 4357 / Et1/99).